We begin with the raw amino-acid sequence, 300 residues long: N-acetylmannosamine kinase (300 aa).

Residues 5 to 12 and 132 to 139 contribute to the ATP site; these read ALDIGGTK and GVGGGIVL. Histidine 156, cysteine 166, cysteine 168, and cysteine 173 together coordinate Zn(2+).

It belongs to the ROK (NagC/XylR) family. NanK subfamily. Homodimer.

It catalyses the reaction an N-acyl-D-mannosamine + ATP = an N-acyl-D-mannosamine 6-phosphate + ADP + H(+). It participates in amino-sugar metabolism; N-acetylneuraminate degradation; D-fructose 6-phosphate from N-acetylneuraminate: step 2/5. Its function is as follows. Catalyzes the phosphorylation of N-acetylmannosamine (ManNAc) to ManNAc-6-P. The protein is N-acetylmannosamine kinase of Haemophilus influenzae (strain PittGG).